Consider the following 469-residue polypeptide: MVRVRFAPSPTGFLHVGGARTALFNFLFARKEKGKFILRIEDTDLERSEREYEEKLMESLRWLGLLWDEGPDVGGDHGPYRQSERVEIYREHAERLVKEGKAYYVYAYPEEIEEMREKLLSEGKAPHYSQEMFEKFDTPERRREYEEKGLRPAVFFKMPRKDYVLNDVVKGEVVFKTGAIGDFVIMRSNGLPTYNFACVVDDMLMEITHVIRGDDHLSNTLRQLALYEAFEKAPPVFAHVSTILGPDGKKLSKRHGATSVEAFRDMGYLPEALVNYLALLGWSHPEGKELLTLEELISSFSLDRLSPNPAIFDPQKLKWMNGYYLRNMPIEKLAELAKPFFEKAGIKIIDEEYFKKVLEITKERVEVLSEFPEESRFFFEDPAPVEIPEEMKEVFSQLKEELQNVRWTMEEITPVFKKVLKQHGVKPKEFYMTLRRVLTGREEGPELVNIIPLLGKEIFLRRIERSLGG.

Residues 8-18 (PSPTGFLHVGG) carry the 'HIGH' region motif. Positions 250–254 (KLSKR) match the 'KMSKS' region motif. Residue K253 coordinates ATP.

It belongs to the class-I aminoacyl-tRNA synthetase family. Glutamate--tRNA ligase type 1 subfamily. Monomer.

The protein localises to the cytoplasm. The catalysed reaction is tRNA(Glu) + L-glutamate + ATP = L-glutamyl-tRNA(Glu) + AMP + diphosphate. Its function is as follows. Catalyzes the attachment of glutamate to tRNA(Glu) in a two-step reaction: glutamate is first activated by ATP to form Glu-AMP and then transferred to the acceptor end of tRNA(Glu). The chain is Glutamate--tRNA ligase 2 from Thermotoga petrophila (strain ATCC BAA-488 / DSM 13995 / JCM 10881 / RKU-1).